A 162-amino-acid chain; its full sequence is Shikimate kinase (162 aa).

11-16 (GSGKSS) is an ATP binding site. Residue serine 15 participates in Mg(2+) binding. Substrate contacts are provided by aspartate 33, arginine 57, and glycine 80. Residue arginine 116 coordinates ATP. Arginine 132 is a binding site for substrate.

The protein belongs to the shikimate kinase family. As to quaternary structure, monomer. Requires Mg(2+) as cofactor.

Its subcellular location is the cytoplasm. The catalysed reaction is shikimate + ATP = 3-phosphoshikimate + ADP + H(+). It participates in metabolic intermediate biosynthesis; chorismate biosynthesis; chorismate from D-erythrose 4-phosphate and phosphoenolpyruvate: step 5/7. Its function is as follows. Catalyzes the specific phosphorylation of the 3-hydroxyl group of shikimic acid using ATP as a cosubstrate. The sequence is that of Shikimate kinase from Helicobacter pylori (strain P12).